Consider the following 159-residue polypeptide: NADH-quinone oxidoreductase subunit I (159 aa).

4Fe-4S ferredoxin-type domains follow at residues 51-80 (RRYE…IEAE) and 90-119 (TRYD…EGPN). Positions 60, 63, 66, 70, 99, 102, 105, and 109 each coordinate [4Fe-4S] cluster.

Belongs to the complex I 23 kDa subunit family. NDH-1 is composed of 14 different subunits. Subunits NuoA, H, J, K, L, M, N constitute the membrane sector of the complex. It depends on [4Fe-4S] cluster as a cofactor.

The protein localises to the cell inner membrane. It carries out the reaction a quinone + NADH + 5 H(+)(in) = a quinol + NAD(+) + 4 H(+)(out). NDH-1 shuttles electrons from NADH, via FMN and iron-sulfur (Fe-S) centers, to quinones in the respiratory chain. The immediate electron acceptor for the enzyme in this species is believed to be ubiquinone. Couples the redox reaction to proton translocation (for every two electrons transferred, four hydrogen ions are translocated across the cytoplasmic membrane), and thus conserves the redox energy in a proton gradient. The sequence is that of NADH-quinone oxidoreductase subunit I from Rickettsia canadensis (strain McKiel).